A 345-amino-acid chain; its full sequence is Phosphoribosylformylglycinamidine cyclo-ligase (345 aa).

It belongs to the AIR synthase family.

The protein localises to the cytoplasm. The catalysed reaction is 2-formamido-N(1)-(5-O-phospho-beta-D-ribosyl)acetamidine + ATP = 5-amino-1-(5-phospho-beta-D-ribosyl)imidazole + ADP + phosphate + H(+). The protein operates within purine metabolism; IMP biosynthesis via de novo pathway; 5-amino-1-(5-phospho-D-ribosyl)imidazole from N(2)-formyl-N(1)-(5-phospho-D-ribosyl)glycinamide: step 2/2. The protein is Phosphoribosylformylglycinamidine cyclo-ligase of Actinobacillus succinogenes (strain ATCC 55618 / DSM 22257 / CCUG 43843 / 130Z).